The primary structure comprises 156 residues: Putative pre-16S rRNA nuclease (156 aa).

The protein belongs to the YqgF nuclease family.

It is found in the cytoplasm. In terms of biological role, could be a nuclease involved in processing of the 5'-end of pre-16S rRNA. This chain is Putative pre-16S rRNA nuclease, found in Ehrlichia ruminantium (strain Gardel).